We begin with the raw amino-acid sequence, 228 residues long: 2-phospho-L-lactate guanylyltransferase (228 aa).

The protein belongs to the CofC family. As to quaternary structure, homodimer.

It carries out the reaction (2S)-2-phospholactate + GTP + H(+) = (2S)-lactyl-2-diphospho-5'-guanosine + diphosphate. Its pathway is cofactor biosynthesis; coenzyme F420 biosynthesis. Its function is as follows. Guanylyltransferase that catalyzes the activation of (2S)-2-phospholactate (2-PL) as (2S)-lactyl-2-diphospho-5'-guanosine, via the condensation of 2-PL with GTP. It is involved in the biosynthesis of coenzyme F420, a hydride carrier cofactor. The polypeptide is 2-phospho-L-lactate guanylyltransferase (Methanosphaera stadtmanae (strain ATCC 43021 / DSM 3091 / JCM 11832 / MCB-3)).